The sequence spans 243 residues: Protein-L-isoaspartate O-methyltransferase (243 aa).

Residue serine 87 is part of the active site.

The protein belongs to the methyltransferase superfamily. L-isoaspartyl/D-aspartyl protein methyltransferase family.

It localises to the cytoplasm. It catalyses the reaction [protein]-L-isoaspartate + S-adenosyl-L-methionine = [protein]-L-isoaspartate alpha-methyl ester + S-adenosyl-L-homocysteine. Catalyzes the methyl esterification of L-isoaspartyl residues in peptides and proteins that result from spontaneous decomposition of normal L-aspartyl and L-asparaginyl residues. It plays a role in the repair and/or degradation of damaged proteins. The protein is Protein-L-isoaspartate O-methyltransferase of Methanosarcina mazei (strain ATCC BAA-159 / DSM 3647 / Goe1 / Go1 / JCM 11833 / OCM 88) (Methanosarcina frisia).